A 379-amino-acid chain; its full sequence is Queuine tRNA-ribosyltransferase (379 aa).

Asp-93 functions as the Proton acceptor in the catalytic mechanism. Substrate-binding positions include 93 to 97 (DSGGF), Asp-147, Gln-191, and Gly-218. Positions 249–255 (GVGKPED) are RNA binding. The Nucleophile role is filled by Asp-268. The interval 273–277 (TRNAR) is RNA binding; important for wobble base 34 recognition. Cys-306, Cys-308, Cys-311, and His-337 together coordinate Zn(2+).

It belongs to the queuine tRNA-ribosyltransferase family. As to quaternary structure, homodimer. Within each dimer, one monomer is responsible for RNA recognition and catalysis, while the other monomer binds to the replacement base PreQ1. Requires Zn(2+) as cofactor.

The catalysed reaction is 7-aminomethyl-7-carbaguanine + guanosine(34) in tRNA = 7-aminomethyl-7-carbaguanosine(34) in tRNA + guanine. The protein operates within tRNA modification; tRNA-queuosine biosynthesis. In terms of biological role, catalyzes the base-exchange of a guanine (G) residue with the queuine precursor 7-aminomethyl-7-deazaguanine (PreQ1) at position 34 (anticodon wobble position) in tRNAs with GU(N) anticodons (tRNA-Asp, -Asn, -His and -Tyr). Catalysis occurs through a double-displacement mechanism. The nucleophile active site attacks the C1' of nucleotide 34 to detach the guanine base from the RNA, forming a covalent enzyme-RNA intermediate. The proton acceptor active site deprotonates the incoming PreQ1, allowing a nucleophilic attack on the C1' of the ribose to form the product. After dissociation, two additional enzymatic reactions on the tRNA convert PreQ1 to queuine (Q), resulting in the hypermodified nucleoside queuosine (7-(((4,5-cis-dihydroxy-2-cyclopenten-1-yl)amino)methyl)-7-deazaguanosine). The protein is Queuine tRNA-ribosyltransferase of Mannheimia succiniciproducens (strain KCTC 0769BP / MBEL55E).